The following is a 185-amino-acid chain: Ribosome-recycling factor (185 aa).

It belongs to the RRF family.

It is found in the cytoplasm. Functionally, responsible for the release of ribosomes from messenger RNA at the termination of protein biosynthesis. May increase the efficiency of translation by recycling ribosomes from one round of translation to another. This is Ribosome-recycling factor from Mycobacterium bovis (strain BCG / Pasteur 1173P2).